The chain runs to 185 residues: Pectinesterase inhibitor (185 aa).

The first 32 residues, 1-32, serve as a signal peptide directing secretion; it reads MAFSYCSSSLFVSLLLVILFISPLSQRPSVKA. Cystine bridges form between Cys41–Cys50 and Cys106–Cys146. A propeptide is located at residue Lys185.

The protein belongs to the PMEI family. Fruit.

It localises to the cytoplasm. Functionally, inhibits pectin methylesterase; may be involved in the regulation of fruit ripening. The sequence is that of Pectinesterase inhibitor (PMEI) from Actinidia deliciosa (Kiwi).